Reading from the N-terminus, the 1005-residue chain is Small G protein signaling modulator 2 (1005 aa).

One can recognise an RUN domain in the interval 34–191 (HEDSSHIIAL…EYTKLKTADH (158 aa)). Disordered regions lie at residues 95–121 (QAEGRKPSGGSQEALRKQGSTGGKAPA) and 205–236 (HRIRGPPNRQDSPAKRPALGIRKRHSSGSASE). Ser402 and Leu444 each carry phosphoserine. Positions 566 to 938 (GVEHEIRKDV…AVWEVIWAAR (373 aa)) constitute a Rab-GAP TBC domain. Disordered regions lie at residues 657-687 (FISVDDLEPSGPQDLEDSKPKREQEPGAGTP) and 729-761 (GFEDDGAGEDGSEGPATAAHTFPGPHDPGQETL). The segment covering 672–681 (EDSKPKREQE) has biased composition (basic and acidic residues). Over residues 730-740 (FEDDGAGEDGS) the composition is skewed to acidic residues.

It belongs to the RUTBC family. Interacts with RAB4A, RAB11A, RAP1A, RAP1B, RAP2A and RAP2B. No interaction with RAB27A. Interacts with RAB9A. Widely expressed.

The protein resides in the cytoplasm. It is found in the melanosome. Possesses GTPase activator activity towards RAB32, RAB33B and RAB38. Regulates the trafficking of melanogenic enzymes TYR, TYRP1 and DCT/TYRP2 to melanosomes in melanocytes by inactivating RAB32 and RAB38. Inhibits RAB32 and RAB38 activation both directly by promoting their GTPase activity and indirectly by disrupting the RAB9A-HPS4 interaction which is required for RAB32/38 activation. This Mus musculus (Mouse) protein is Small G protein signaling modulator 2 (Sgsm2).